A 617-amino-acid polypeptide reads, in one-letter code: E3 ubiquitin-protein ligase synoviolin (617 aa).

Residues 1–4 (MFRT) are Cytoplasmic-facing. Positions 1 to 84 (MFRTAVMMAA…EHLLERSWYA (84 aa)) are necessary and sufficient for SEL1L interaction. An involved in FAM8A1 interaction region spans residues 1 to 251 (MFRTAVMMAA…LFAIRPMYLA (251 aa)). A helical transmembrane segment spans residues 5–25 (AVMMAASLALTGAVVAHAYYL). The Lumenal portion of the chain corresponds to 26 to 41 (KHQFYPTVVYLTKSSP). A helical transmembrane segment spans residues 42–62 (SMAVLYIQAFVLVFLLGKVMG). Over 63–98 (KVFFGQLRAAEMEHLLERSWYAVTETCLAFTVFRDD) the chain is Cytoplasmic. Residues 99-119 (FSPRFVALFTLLLFLKCFHWL) form a helical membrane-spanning segment. Residues 120-140 (AEDRVDFMERSPNISWLFHCR) are Lumenal-facing. Residues 141 to 161 (IVSLMFLLGILDFLFVSHAYH) form a helical membrane-spanning segment. The Cytoplasmic portion of the chain corresponds to 162 to 169 (SILTRGAS). The helical transmembrane segment at 170–190 (VQLVFGFEYAILMTMVLTIFI) threads the bilayer. Residues 191-224 (KYVLHSVDLQSENPWDNKAVYMLYTELFTGFIKV) are Lumenal-facing. The helical transmembrane segment at 225-245 (LLYMAFMTIMIKVHTFPLFAI) threads the bilayer. An interaction with p53/TP53 region spans residues 236–270 (KVHTFPLFAIRPMYLAMRQFKKAVTDAIMSRRAIR). Over 246-617 (RPMYLAMRQF…LQKLESPVAH (372 aa)) the chain is Cytoplasmic. 8 residues coordinate Zn(2+): C291, C294, C307, H309, H312, C315, C326, and C329. The segment at 291–330 (CIICREEMVTGAKRLPCNHIFHTSCLRSWFQRQQTCPTCR) adopts an RING-type; atypical zinc-finger fold. Disordered stretches follow at residues 337–375 (SLPA…GLLP), 393–453 (PVPP…PAPG), and 535–617 (RPAT…PVAH). Residues 341-375 (QSPPPPEPADQGPPPAPHPPPLLPQPPNFPQGLLP) are compositionally biased toward pro residues. Residues 417–451 (PSGAATTTAAGTSATAASATASGPGSGSAPEAGPA) are compositionally biased toward low complexity. Residues 480 to 535 (GFAGLTPEELRALEGHERQHLEARLQSLRNIHTLLDAAMLQINQYLTVLASLGPPR) are HAF-H domain; necessary to form higher-order Hrd1 complexes. A compositionally biased stretch (low complexity) spans 537–569 (ATSVNSTEETATTVVAAASSTSIPSSEATTPTP). Acidic residues predominate over residues 591–600 (EMPEDGEPDA). Phosphoserine is present on S613.

This sequence belongs to the HRD1 family. Homodimer. Interacts with p53/TP53. Interacts with HTT. Component of the HRD1 complex, which comprises at least SYNV1/HRD1, DERL1/2, FAM8A1, HERPUD1/HERP, OS9, SEL1L and UBE2J1. FAM8A1 is stabilized by interaction with SYNV1, which prevents its proteasomal degradation. OS9 and UBE2J1 recruitment to the complex may be mediated by SEL1L. SYNV1 assembles with SEL1L and FAM8A1 through its transmembrane domains, but interaction with its cytoplasmic domain is required to confer stability to FAM8A1 and enhance recruitment of HERPUD1. The HRD1 complex also associates with VIMP and may transfer misfolded proteins from the endoplasmic reticulum to VCP. May form a complex with ERLEC1, HSPA5, OS9 and SEL1L. Interacts with VCP. Interacts with UBXN6. Interacts with BAG6. Interacts with NFE2L1. Interacts (via N-terminus) with components of the pre-B cell receptor, including IGLL1 and VPREB1. Interacts with CREB3L3; this interaction leads to CREB3L3 ubiquitination and proteasomal degradation. In terms of processing, not N-glycosylated. Post-translationally, auto-ubiquitinated. Deubiquitinated by USP19. In terms of tissue distribution, ubiquitously expressed, with highest levels in liver and kidney (at protein level). Up-regulated in synovial tissues from patients with rheumatoid arthritis (at protein level).

It is found in the endoplasmic reticulum membrane. The catalysed reaction is S-ubiquitinyl-[E2 ubiquitin-conjugating enzyme]-L-cysteine + [acceptor protein]-L-lysine = [E2 ubiquitin-conjugating enzyme]-L-cysteine + N(6)-ubiquitinyl-[acceptor protein]-L-lysine.. Its pathway is protein modification; protein ubiquitination. In terms of biological role, E3 ubiquitin-protein ligase which accepts ubiquitin specifically from endoplasmic reticulum-associated UBC7 E2 ligase and transfers it to substrates, promoting their degradation. Component of the endoplasmic reticulum quality control (ERQC) system also called ER-associated degradation (ERAD) involved in ubiquitin-dependent degradation of misfolded endoplasmic reticulum proteins. Also promotes the degradation of normal but naturally short-lived proteins such as SGK. Protects cells from ER stress-induced apoptosis. Protects neurons from apoptosis induced by polyglutamine-expanded huntingtin (HTT) or unfolded GPR37 by promoting their degradation. Sequesters p53/TP53 in the cytoplasm and promotes its degradation, thereby negatively regulating its biological function in transcription, cell cycle regulation and apoptosis. Mediates the ubiquitination and subsequent degradation of cytoplasmic NFE2L1. During the early stage of B cell development, required for degradation of the pre-B cell receptor (pre-BCR) complex, hence supporting further differentiation into mature B cells. The chain is E3 ubiquitin-protein ligase synoviolin from Homo sapiens (Human).